The chain runs to 148 residues: MGSDRKIRVVVGGVFDIIHAGHVHFLKMAKELGDELIVIVAHDETVKKRKGRPPINPAEDRAEVLKAIRYVDDVVIGKPGEISLDLIKRLKPDVIALGPDQDFDCEDLKRKLKSIGLNVEVIRLPYLYKKDRAKTSKIIERITEIFCD.

ATP is bound by residues 14-15 (VF), 19-22 (HAGH), and Asp-100.

The protein belongs to the archaeal FAD synthase family. As to quaternary structure, homodimer. Requires a divalent metal cation as cofactor.

The catalysed reaction is FMN + ATP + H(+) = FAD + diphosphate. Its pathway is cofactor biosynthesis; FAD biosynthesis; FAD from FMN: step 1/1. Its function is as follows. Catalyzes the transfer of the AMP portion of ATP to flavin mononucleotide (FMN) to produce flavin adenine dinucleotide (FAD) coenzyme. The protein is FAD synthase of Pyrococcus horikoshii (strain ATCC 700860 / DSM 12428 / JCM 9974 / NBRC 100139 / OT-3).